The primary structure comprises 734 residues: Cytoplasmic polyadenylation element-binding protein 3 (734 aa).

Disordered stretches follow at residues 1-31 (MDRNDDSAPVQAAAEPAEHPGDEKSGKRNVP), 98-185 (GSKK…AARN), and 220-283 (RGSL…LPPR). The segment covering 16–26 (PAEHPGDEKSG) has biased composition (basic and acidic residues). Composition is skewed to low complexity over residues 121–140 (SRRTTPTASASTAKTTSPSR) and 232–242 (KSFSSTTTSSS). Over residues 243-256 (PEKEREKEKEKIEQ) the composition is skewed to basic and acidic residues. Positions 259–275 (YGTTQRQSVNSQQSSAS) are enriched in polar residues. The RRM domain maps to 294-316 (IFVGGVPWDITEAALKDSFGEFG). Disordered stretches follow at residues 564 to 593 (KAYQGHASRHSHLSSNSPSKARDGQNSNNS) and 630 to 657 (TVYDGPLTPPSSETMSKRGSREFSSNSN). Residues 576–593 (LSSNSPSKARDGQNSNNS) are compositionally biased toward low complexity.

Cytoplasmic polyadenylation element binding protein that binds to and regulates the translation of specific mRNAs. In Caenorhabditis japonica, this protein is Cytoplasmic polyadenylation element-binding protein 3 (cpb-3).